The sequence spans 286 residues: AB hydrolase superfamily protein YfhM (286 aa).

Residues 27–272 form the AB hydrolase-1 domain; sequence PLIVLLHGFP…ASHWINHEKP (246 aa). Aspartate 103 serves as the catalytic Nucleophile. Tyrosine 210 serves as the catalytic Proton donor. Histidine 265 (proton acceptor) is an active-site residue.

This sequence belongs to the AB hydrolase superfamily. Epoxide hydrolase family.

The chain is AB hydrolase superfamily protein YfhM (yfhM) from Bacillus subtilis (strain 168).